We begin with the raw amino-acid sequence, 355 residues long: Peptide chain release factor 1 (355 aa).

An N5-methylglutamine modification is found at Q231.

The protein belongs to the prokaryotic/mitochondrial release factor family. In terms of processing, methylated by PrmC. Methylation increases the termination efficiency of RF1.

The protein localises to the cytoplasm. Its function is as follows. Peptide chain release factor 1 directs the termination of translation in response to the peptide chain termination codons UAG and UAA. The polypeptide is Peptide chain release factor 1 (Sulfurovum sp. (strain NBC37-1)).